A 625-amino-acid polypeptide reads, in one-letter code: Interleukin-1 receptor-associated kinase-like 2 (625 aa).

One can recognise a Death domain in the interval 13–94 (LDDPCRNMDA…RAAQIILNWK (82 aa)). The interval 111–181 (KPEKPLAASV…SSDSKDFSTS (71 aa)) is disordered. Residue Ser-144 is modified to Phosphoserine. Over residues 169–181 (LPTSSDSKDFSTS) the composition is skewed to polar residues. The Protein kinase domain maps to 210–503 (FNQNHKISQG…GSVAAVEEWL (294 aa)). ATP contacts are provided by residues 216–224 (ISQGTFADV), Lys-237, and 337–340 (KSSN). Positions 513 to 539 (SGLSEGTGSSSNTPEETDDVDNSSLDA) are disordered. A compositionally biased stretch (polar residues) spans 516–526 (SEGTGSSSNTP).

This sequence belongs to the protein kinase superfamily. TKL Ser/Thr protein kinase family. Pelle subfamily. As to quaternary structure, interacts with MYD88. IL-1 stimulation leads to the formation of a signaling complex which dissociates from the IL-1 receptor following the binding of PELI1.

In terms of biological role, binds to the IL-1 type I receptor following IL-1 engagement, triggering intracellular signaling cascades leading to transcriptional up-regulation and mRNA stabilization. This is Interleukin-1 receptor-associated kinase-like 2 (IRAK2) from Pongo abelii (Sumatran orangutan).